We begin with the raw amino-acid sequence, 207 residues long: Uracil phosphoribosyltransferase (207 aa).

5-phospho-alpha-D-ribose 1-diphosphate-binding positions include Arg77, Arg102, and Asp129–Ser137. Residues Ile192 and Gly197–Ala199 contribute to the uracil site. Asp198 is a binding site for 5-phospho-alpha-D-ribose 1-diphosphate.

It belongs to the UPRTase family. Requires Mg(2+) as cofactor.

It catalyses the reaction UMP + diphosphate = 5-phospho-alpha-D-ribose 1-diphosphate + uracil. It functions in the pathway pyrimidine metabolism; UMP biosynthesis via salvage pathway; UMP from uracil: step 1/1. Its activity is regulated as follows. Allosterically activated by GTP. Functionally, catalyzes the conversion of uracil and 5-phospho-alpha-D-ribose 1-diphosphate (PRPP) to UMP and diphosphate. The polypeptide is Uracil phosphoribosyltransferase (Mesoplasma florum (strain ATCC 33453 / NBRC 100688 / NCTC 11704 / L1) (Acholeplasma florum)).